The chain runs to 1843 residues: MKEPDDQDTSDGGRSGSRNEGKLAHKSILKSSQDTTADSYTDGEESYLGDDLDLDDMDESSHSSQEYVQAPAPSQEPPVEVKEEPEADVKKVLSETFYYDYPELVSIPYVSSEERIPLYFLTLNHSFGYDCRKRANLQLLDSNTLLYVAGNQMVLLDFKDKTQIYLQSSSGQGIGAIGVHPKKTYFAVAEKGSFPKIIIYEYPSLKPYRILRDGAEKAYAYVDFNNEGNLLASVGCHPDYTITIWGWKEEQPILRTKAFSQDVFKVTFNPDNDEQLTTSGSGHIKFWEMAFTFTGLKLQGSLGRFGKTSTSDIEGYAELPDGKVLSGSEWGNLLLWEGSLIKVELCRTGMKSCHSGSINQIMLDEGEVITAGSDGSVRIWDFETIDTADVIDDTGLLEIEPINELHIDKSVNLFSMIKMNEVGNNFWLAQDANGAIWKLDLSFSNITQDPECLFSFHSGPIAALAVSPLTYLMATTAMDCSVRVYDFSSKNPLVHMKFKQGGTSLIWAPRSVSVSASQIVVGFQDGVVRVLELFDPKGLTVYAGRKKIPDAELHLKYVFKPHTDEVTALAYERDGDILATGSEDKTVFFFDVEKEYKPIGFFNTPGPICQLMWSPASHPEKTLLIICENGYILESLCPTIKDVDDQNVITFAIPNVFLRCFHFTSVKSKILRFLEVQRREQQKMLKEKEKLERRMKLAEEREAFGEEEIPEEETSEEGEEEEPPLPEIFMPPTPSPILCGFYSEPGKFWVSLGNYDAGFLYHCQFPSYLHNSDFQKQENEPFDFRVLENTEDNPIRNITFSNDQTMMFCGMTNGAIRVYVLSENDPFLVSLQHYWHFNVHDNNYGSIKSITSSFDDQYLLTAGEDGNIFVFDIFSEFIVPKGIKAKVPSPRFGIESEAAPEDIEDPKAYSIENARKKREHDKLMKKVEELKAHKREQIKILRNEFWKLLELNKELPAHMQFQRTDFNIDAKIHAEIHKKTSLKIEQVEKELAWEKQKHELGLKKLQDRFREPLESDTIVVYATQSDHQIASYRLVKPSKYSKLKRPSQSERRQSKMERLEKEGPGKKESQRDTGGSISLQEESVLEKGKKFRPRTLSEIMVENQIEKTKKLIQQAERAQFKILQRKKEWEELYKSKPDDDYEDPKDVQAIKEAQTYMGDFNLKTAPDYKIPEHMRINAAKKEEELGYLDTMAHGKKRYMNKCILSLRDLKLAVIEEIQCLVQELKNIQSSIPASKHMPIPQVPQIYPEEVPERRFQYDEETLLRFQRKQKKRQDKSSSKQSGTGSGGSAGGGLVGFLKLSSGKEGDLTTRDSLSRSSKASALLELPKPVEFEKAEPSDAELEIMKRDEVKHLYMQQFLCNRINELTVTFDAELHLLRHQKLKLDTKMKLSDLHHLTLFQEMLLLKNFEKQENILQERVNSLDKEEQDMQWKINETLKEMEEKKNEITKLQDQEKALYAGFQAALGENNKFANFLMKVLKKKIKRAKKKEVEGDADEDEESEESSEEESSLESDEDASGSEDDVFDDSICPTNCDVSLFELALQLREKRLDIEEALVEEKKIVDNLKKEYDTISKKVKVVATNLNAAEEALEAYQREKQQRLNELLVVIPLKLHQIEYMEFGEVPEDLSGTLVFSNHSLDRLQERIVQLQEENAKQQKLNKECRERRKLLIREKREMAKTISKMEETVRELMISKFGRVIDLEALQTLSVNTTLEELKIKKLRKELSNAKELRMWEEKIAQVRWDLMMKTKEHTKKLHQMNDLCLEKKKLDSRLNTLQNQQGNAFQGLRKADIVAKQKVTELVQTQLEKITALKEEIELLRKKGGLLLPPITPKPKNEMKPMDT.

Positions 1-86 are disordered; it reads MKEPDDQDTS…PPVEVKEEPE (86 aa). A compositionally biased stretch (polar residues) spans 29–39; the sequence is LKSSQDTTADS. Over residues 41–58 the composition is skewed to acidic residues; it reads TDGEESYLGDDLDLDDMD. WD repeat units follow at residues 214–255, 258–297, 308–346, 353–390, 456–495, 497–541, and 561–600; these read GAEK…PILR, AFSQ…TGLK, TSTS…VELC, CHSG…TADV, FHSG…PLVH, KFKQ…GLTV, and PHTD…KPIG. A disordered region spans residues 701–726; that stretch reads REAFGEEEIPEEETSEEGEEEEPPLP. Acidic residues predominate over residues 705-724; that stretch reads GEEEIPEEETSEEGEEEEPP. 2 WD repeats span residues 790-829 and 842-881; these read TEDN…PFLV and NNYG…IVPK. Disordered stretches follow at residues 1040–1086, 1266–1291, and 1488–1524; these read YSKL…SVLE, QRKQ…SAGG, and KEVE…DDVF. Residues 1047–1071 are compositionally biased toward basic and acidic residues; the sequence is SQSERRQSKMERLEKEGPGKKESQR. S1069 carries the post-translational modification Phosphoserine. Polar residues predominate over residues 1072-1081; that stretch reads DTGGSISLQE. The segment covering 1492–1524 has biased composition (acidic residues); that stretch reads GDADEDEESEESSEEESSLESDEDASGSEDDVF. 2 coiled-coil regions span residues 1548-1603 and 1631-1665; these read RLDI…RLNE and LVFS…CRER. Residues 1699–1744 form a WD 10 repeat; that stretch reads IDLEALQTLSVNTTLEELKIKKLRKELSNAKELRMWEEKIAQVRWD.

This sequence belongs to the CFAP44 family. Expressed in testis.

Its subcellular location is the cell projection. It localises to the cilium. The protein resides in the flagellum. The protein localises to the cytoplasm. It is found in the cytoskeleton. Its subcellular location is the flagellum axoneme. Flagellar protein involved in sperm flagellum axoneme organization and function. The sequence is that of Cilia- and flagella-associated protein 44 from Mus musculus (Mouse).